We begin with the raw amino-acid sequence, 481 residues long: ATP synthase subunit beta, chloroplastic (481 aa).

An ATP-binding site is contributed by Gly161 to Thr168.

It belongs to the ATPase alpha/beta chains family. As to quaternary structure, F-type ATPases have 2 components, CF(1) - the catalytic core - and CF(0) - the membrane proton channel. CF(1) has five subunits: alpha(3), beta(3), gamma(1), delta(1), epsilon(1). CF(0) has four main subunits: a(1), b(1), b'(1) and c(9-12).

The protein localises to the plastid. It is found in the chloroplast thylakoid membrane. The catalysed reaction is ATP + H2O + 4 H(+)(in) = ADP + phosphate + 5 H(+)(out). Produces ATP from ADP in the presence of a proton gradient across the membrane. The catalytic sites are hosted primarily by the beta subunits. The chain is ATP synthase subunit beta, chloroplastic from Dictyota dichotoma.